We begin with the raw amino-acid sequence, 815 residues long: Phosphatidylinositol 4-phosphate 5-kinase 9 (815 aa).

8 MORN repeats span residues 58 to 80 (YSGS…DGCV), 81 to 103 (YDGE…SGAS), 104 to 126 (YDGE…NKLT), 127 to 149 (YKGR…NGDV), 150 to 172 (FEGS…NKNV), 173 to 195 (YLGD…TGDS), 196 to 218 (YEGS…DGGC), and 219 to 240 (YVGT…AGTR). Residues 391-809 (GHRSYDLMLS…RFLEFIKKVF (419 aa)) enclose the PIPK domain. The interval 769-790 (YNMTKKIEHAYKSLHFDSLSIS) is activation loop.

Interacts with CINV1. As to expression, widely expressed.

The protein resides in the membrane. It is found in the nucleus. It catalyses the reaction a 1,2-diacyl-sn-glycero-3-phospho-(1D-myo-inositol 4-phosphate) + ATP = a 1,2-diacyl-sn-glycero-3-phospho-(1D-myo-inositol-4,5-bisphosphate) + ADP + H(+). Plays a role in sugar-mediated root development. Interaction with CINV1 induces repression of CINV1 activity and negative regulation of sugar-mediated root cell elongation. This chain is Phosphatidylinositol 4-phosphate 5-kinase 9 (PIP5K9), found in Arabidopsis thaliana (Mouse-ear cress).